A 1222-amino-acid polypeptide reads, in one-letter code: ATP-dependent helicase/nuclease subunit A (1222 aa).

The UvrD-like helicase ATP-binding domain maps to Q39–Q495. A60–T67 lines the ATP pocket. The UvrD-like helicase C-terminal domain occupies Q524–G810.

Belongs to the helicase family. AddA subfamily. In terms of assembly, heterodimer of AddA and AddB/RexB. Mg(2+) is required as a cofactor.

The enzyme catalyses Couples ATP hydrolysis with the unwinding of duplex DNA by translocating in the 3'-5' direction.. It catalyses the reaction ATP + H2O = ADP + phosphate + H(+). Functionally, the heterodimer acts as both an ATP-dependent DNA helicase and an ATP-dependent, dual-direction single-stranded exonuclease. Recognizes the chi site generating a DNA molecule suitable for the initiation of homologous recombination. The AddA nuclease domain is required for chi fragment generation; this subunit has the helicase and 3' -&gt; 5' nuclease activities. This chain is ATP-dependent helicase/nuclease subunit A, found in Streptococcus pyogenes serotype M6 (strain ATCC BAA-946 / MGAS10394).